We begin with the raw amino-acid sequence, 300 residues long: Acetyl-coenzyme A carboxylase carboxyl transferase subunit beta 1 (300 aa).

The CoA carboxyltransferase N-terminal domain maps to 26 to 294 (MWVKCPSCGD…HTSAAQHVPA (269 aa)). Residues Cys30, Cys33, Cys49, and Cys51 each contribute to the Zn(2+) site. Residues 30–51 (CPSCGDLIYTRQFSDNLKVCKC) form a C4-type zinc finger.

It belongs to the AccD/PCCB family. In terms of assembly, acetyl-CoA carboxylase is a heterohexamer composed of biotin carboxyl carrier protein (AccB), biotin carboxylase (AccC) and two subunits each of ACCase subunit alpha (AccA) and ACCase subunit beta (AccD). Zn(2+) serves as cofactor.

It is found in the cytoplasm. The catalysed reaction is N(6)-carboxybiotinyl-L-lysyl-[protein] + acetyl-CoA = N(6)-biotinyl-L-lysyl-[protein] + malonyl-CoA. It functions in the pathway lipid metabolism; malonyl-CoA biosynthesis; malonyl-CoA from acetyl-CoA: step 1/1. Functionally, component of the acetyl coenzyme A carboxylase (ACC) complex. Biotin carboxylase (BC) catalyzes the carboxylation of biotin on its carrier protein (BCCP) and then the CO(2) group is transferred by the transcarboxylase to acetyl-CoA to form malonyl-CoA. The polypeptide is Acetyl-coenzyme A carboxylase carboxyl transferase subunit beta 1 (Roseiflexus sp. (strain RS-1)).